Here is an 81-residue protein sequence, read N- to C-terminus: Omega-conotoxin-like 3 (81 aa).

The first 22 residues, 1 to 22 (MKLTCMMIVAVLFLTASIFITA), serve as a signal peptide directing secretion. The propeptide occupies 23-51 (DNSRNGIENLPRMRRHEMKKPKASKLNKR). 3 disulfide bridges follow: Cys53–Cys71, Cys60–Cys75, and Cys70–Cys79.

Belongs to the conotoxin O1 superfamily. As to expression, expressed by the venom duct.

The protein resides in the secreted. Functionally, omega-conotoxins act at presynaptic membranes, they bind and block voltage-gated calcium channels (Cav). The chain is Omega-conotoxin-like 3 from Conus imperialis (Imperial cone).